The primary structure comprises 321 residues: Lipoyl synthase (321 aa).

7 residues coordinate [4Fe-4S] cluster: cysteine 68, cysteine 73, cysteine 79, cysteine 94, cysteine 98, cysteine 101, and serine 308. Positions 80–297 (FNHGTATFMI…KELAESIGFT (218 aa)) constitute a Radical SAM core domain.

This sequence belongs to the radical SAM superfamily. Lipoyl synthase family. It depends on [4Fe-4S] cluster as a cofactor.

The protein resides in the cytoplasm. It catalyses the reaction [[Fe-S] cluster scaffold protein carrying a second [4Fe-4S](2+) cluster] + N(6)-octanoyl-L-lysyl-[protein] + 2 oxidized [2Fe-2S]-[ferredoxin] + 2 S-adenosyl-L-methionine + 4 H(+) = [[Fe-S] cluster scaffold protein] + N(6)-[(R)-dihydrolipoyl]-L-lysyl-[protein] + 4 Fe(3+) + 2 hydrogen sulfide + 2 5'-deoxyadenosine + 2 L-methionine + 2 reduced [2Fe-2S]-[ferredoxin]. Its pathway is protein modification; protein lipoylation via endogenous pathway; protein N(6)-(lipoyl)lysine from octanoyl-[acyl-carrier-protein]: step 2/2. Functionally, catalyzes the radical-mediated insertion of two sulfur atoms into the C-6 and C-8 positions of the octanoyl moiety bound to the lipoyl domains of lipoate-dependent enzymes, thereby converting the octanoylated domains into lipoylated derivatives. The sequence is that of Lipoyl synthase from Shewanella pealeana (strain ATCC 700345 / ANG-SQ1).